The following is a 153-amino-acid chain: Aspartate carbamoyltransferase regulatory chain (153 aa).

Residues cysteine 110, cysteine 115, cysteine 138, and cysteine 141 each coordinate Zn(2+).

The protein belongs to the PyrI family. Contains catalytic and regulatory chains. It depends on Zn(2+) as a cofactor.

Functionally, involved in allosteric regulation of aspartate carbamoyltransferase. This chain is Aspartate carbamoyltransferase regulatory chain, found in Bacteroides thetaiotaomicron (strain ATCC 29148 / DSM 2079 / JCM 5827 / CCUG 10774 / NCTC 10582 / VPI-5482 / E50).